The primary structure comprises 181 residues: Isopentenyl-diphosphate Delta-isomerase (181 aa).

Mn(2+) contacts are provided by His-24 and His-30. The Nudix hydrolase domain maps to 28-168; the sequence is LLHLAFSVLL…PDTFSVWFPT (141 aa). Cys-68 is a catalytic residue. A Mn(2+)-binding site is contributed by His-70. Glu-88 lines the Mg(2+) pocket. Residues Glu-117 and Glu-119 each coordinate Mn(2+). Residue Glu-119 is part of the active site.

It belongs to the IPP isomerase type 1 family. Requires Mg(2+) as cofactor. It depends on Mn(2+) as a cofactor.

It is found in the cytoplasm. It catalyses the reaction isopentenyl diphosphate = dimethylallyl diphosphate. It participates in isoprenoid biosynthesis; dimethylallyl diphosphate biosynthesis; dimethylallyl diphosphate from isopentenyl diphosphate: step 1/1. Catalyzes the 1,3-allylic rearrangement of the homoallylic substrate isopentenyl (IPP) to its highly electrophilic allylic isomer, dimethylallyl diphosphate (DMAPP). The polypeptide is Isopentenyl-diphosphate Delta-isomerase (Aliivibrio fischeri (strain MJ11) (Vibrio fischeri)).